The following is a 328-amino-acid chain: Serine protease 48 (328 aa).

The signal sequence occupies residues Met-1–Gly-20. A Peptidase S1 domain is found at Val-28–Ser-267. A disulfide bond links Cys-53 and Cys-69. Catalysis depends on charge relay system residues His-68 and Asp-114. 3 disulfide bridges follow: Cys-148–Cys-226, Cys-181–Cys-205, and Cys-216–Cys-244. The active-site Charge relay system is Ser-220. A glycan (N-linked (GlcNAc...) asparagine) is linked at Asn-263.

It belongs to the peptidase S1 family.

Its subcellular location is the secreted. In Homo sapiens (Human), this protein is Serine protease 48 (PRSS48).